Here is a 339-residue protein sequence, read N- to C-terminus: Undecaprenyl-phosphate 4-deoxy-4-formamido-L-arabinose transferase (339 aa).

Transmembrane regions (helical) follow at residues 235–255 and 269–289; these read LSLV…FLLV and LFVL…GMGL.

It belongs to the glycosyltransferase 2 family.

Its subcellular location is the cell inner membrane. It catalyses the reaction UDP-4-deoxy-4-formamido-beta-L-arabinose + di-trans,octa-cis-undecaprenyl phosphate = 4-deoxy-4-formamido-alpha-L-arabinopyranosyl di-trans,octa-cis-undecaprenyl phosphate + UDP. It functions in the pathway glycolipid biosynthesis; 4-amino-4-deoxy-alpha-L-arabinose undecaprenyl phosphate biosynthesis; 4-amino-4-deoxy-alpha-L-arabinose undecaprenyl phosphate from UDP-4-deoxy-4-formamido-beta-L-arabinose and undecaprenyl phosphate: step 1/2. The protein operates within bacterial outer membrane biogenesis; lipopolysaccharide biosynthesis. Catalyzes the transfer of 4-deoxy-4-formamido-L-arabinose from UDP to undecaprenyl phosphate. The modified arabinose is attached to lipid A and is required for resistance to polymyxin and cationic antimicrobial peptides. This Pseudomonas aeruginosa (strain LESB58) protein is Undecaprenyl-phosphate 4-deoxy-4-formamido-L-arabinose transferase.